The primary structure comprises 204 residues: NADH-quinone oxidoreductase subunit C (204 aa).

Belongs to the complex I 30 kDa subunit family. As to quaternary structure, NDH-1 is composed of 14 different subunits. Subunits NuoB, C, D, E, F, and G constitute the peripheral sector of the complex.

The protein localises to the cell inner membrane. It carries out the reaction a quinone + NADH + 5 H(+)(in) = a quinol + NAD(+) + 4 H(+)(out). Its function is as follows. NDH-1 shuttles electrons from NADH, via FMN and iron-sulfur (Fe-S) centers, to quinones in the respiratory chain. The immediate electron acceptor for the enzyme in this species is believed to be ubiquinone. Couples the redox reaction to proton translocation (for every two electrons transferred, four hydrogen ions are translocated across the cytoplasmic membrane), and thus conserves the redox energy in a proton gradient. In Vesicomyosocius okutanii subsp. Calyptogena okutanii (strain HA), this protein is NADH-quinone oxidoreductase subunit C.